Reading from the N-terminus, the 209-residue chain is Small ribosomal subunit protein uS4 (209 aa).

The S4 RNA-binding domain maps to Gly99–Lys179.

This sequence belongs to the universal ribosomal protein uS4 family. In terms of assembly, part of the 30S ribosomal subunit. Contacts protein S5. The interaction surface between S4 and S5 is involved in control of translational fidelity.

Its function is as follows. One of the primary rRNA binding proteins, it binds directly to 16S rRNA where it nucleates assembly of the body of the 30S subunit. Functionally, with S5 and S12 plays an important role in translational accuracy. The sequence is that of Small ribosomal subunit protein uS4 from Azoarcus sp. (strain BH72).